A 64-amino-acid chain; its full sequence is Putative isoleucine--tRNA ligase (64 aa).

This sequence belongs to the class-I aminoacyl-tRNA synthetase family. In terms of assembly, member of a complex that includes annexin.

The enzyme catalyses tRNA(Ile) + L-isoleucine + ATP = L-isoleucyl-tRNA(Ile) + AMP + diphosphate. This chain is Putative isoleucine--tRNA ligase, found in Physarum polycephalum (Slime mold).